The chain runs to 456 residues: Adenylosuccinate lyase (456 aa).

N(6)-(1,2-dicarboxyethyl)-AMP-binding positions include Arg-15–Tyr-16, Asn-90–Asp-92, and Thr-122–Ser-123. The active-site Proton donor/acceptor is His-171. Gln-248 is a N(6)-(1,2-dicarboxyethyl)-AMP binding site. Ser-296 (proton donor/acceptor) is an active-site residue. Residues Ser-297, Lys-302–Asn-304, Asn-310, Arg-336, and Ser-341–Arg-345 contribute to the N(6)-(1,2-dicarboxyethyl)-AMP site.

It belongs to the lyase 1 family. Adenylosuccinate lyase subfamily. In terms of assembly, homotetramer. Residues from neighboring subunits contribute catalytic and substrate-binding residues to each active site.

It catalyses the reaction N(6)-(1,2-dicarboxyethyl)-AMP = fumarate + AMP. The enzyme catalyses (2S)-2-[5-amino-1-(5-phospho-beta-D-ribosyl)imidazole-4-carboxamido]succinate = 5-amino-1-(5-phospho-beta-D-ribosyl)imidazole-4-carboxamide + fumarate. Its pathway is purine metabolism; AMP biosynthesis via de novo pathway; AMP from IMP: step 2/2. It participates in purine metabolism; IMP biosynthesis via de novo pathway; 5-amino-1-(5-phospho-D-ribosyl)imidazole-4-carboxamide from 5-amino-1-(5-phospho-D-ribosyl)imidazole-4-carboxylate: step 2/2. Catalyzes two reactions in de novo purine nucleotide biosynthesis. Catalyzes the breakdown of 5-aminoimidazole- (N-succinylocarboxamide) ribotide (SAICAR or 2-[5-amino-1-(5-phospho-beta-D-ribosyl)imidazole-4-carboxamido]succinate) to 5-aminoimidazole-4-carboxamide ribotide (AICAR or 5-amino-1-(5-phospho-beta-D-ribosyl)imidazole-4-carboxamide) and fumarate, and of adenylosuccinate (ADS or N(6)-(1,2-dicarboxyethyl)-AMP) to adenosine monophosphate (AMP) and fumarate. The protein is Adenylosuccinate lyase (purB) of Pseudomonas aeruginosa (strain ATCC 15692 / DSM 22644 / CIP 104116 / JCM 14847 / LMG 12228 / 1C / PRS 101 / PAO1).